Reading from the N-terminus, the 271-residue chain is Keratin-associated protein 10-5 (271 aa).

Tandem repeats lie at residues 26-30, 51-55, 73-77, 78-82, 88-92, 93-97, 98-102, 110-114, 120-124, 130-134, 135-139, 140-144, 152-156, 162-166, 177-181, 187-191, 199-203, 209-213, 214-218, 233-237, 240-244, and 251-255. The interval 26-255 is 22 X 5 AA repeats of C-C-X(3); the sequence is CCEPPCGTAP…SYQASCCRPA (230 aa).

Belongs to the KRTAP type 10 family. Interacts with hair keratins. As to expression, restricted to a narrow region of the hair fiber cuticle, lying approximately 20 cell layers above the apex of the dermal papilla of the hair root; not detected in any other tissues.

Functionally, in the hair cortex, hair keratin intermediate filaments are embedded in an interfilamentous matrix, consisting of hair keratin-associated proteins (KRTAP), which are essential for the formation of a rigid and resistant hair shaft through their extensive disulfide bond cross-linking with abundant cysteine residues of hair keratins. The matrix proteins include the high-sulfur and high-glycine-tyrosine keratins. In Homo sapiens (Human), this protein is Keratin-associated protein 10-5 (KRTAP10-5).